The following is a 785-amino-acid chain: Putative lipase C4A8.10 (785 aa).

Disordered regions lie at residues 29–99 and 115–140; these read HSAT…SSDF and NTNA…VGTS. Positions 32 to 41 are enriched in low complexity; it reads TSSTTVPPTV. Basic and acidic residues predominate over residues 47 to 58; sequence TKKESGSIEDRA. Residues 63–86 show a composition bias toward polar residues; it reads MTISSGENISKQISENNSSTNPKH. 2 stretches are compositionally biased toward low complexity: residues 89 to 99 and 127 to 140; these read SESSPLLSSDF and GVSH…VGTS. Ser-390 (charge relay system) is an active-site residue.

It belongs to the putative lipase ROG1 family.

The polypeptide is Putative lipase C4A8.10 (Schizosaccharomyces pombe (strain 972 / ATCC 24843) (Fission yeast)).